Reading from the N-terminus, the 132-residue chain is MFDIGFWELVLISVVGLVVLGPERLPHAIRSVSRFIGAAKNMANSVKDELSHELKVQELQENLRKAEQMGMEDLSPELKSSVEELKKAAQSVNRPYADKAQSETETAKAEPVTESAEKVEEIKVSAADKKAE.

Residues 1–21 form a helical membrane-spanning segment; that stretch reads MFDIGFWELVLISVVGLVVLG. The disordered stretch occupies residues 70–132; sequence GMEDLSPELK…KVSAADKKAE (63 aa). Composition is skewed to basic and acidic residues over residues 96-108 and 115-132; these read YADK…ETAK and SAEK…KKAE.

It belongs to the TatB family. The Tat system comprises two distinct complexes: a TatABC complex, containing multiple copies of TatA, TatB and TatC subunits, and a separate TatA complex, containing only TatA subunits. Substrates initially bind to the TatABC complex, which probably triggers association of the separate TatA complex to form the active translocon.

Its subcellular location is the cell inner membrane. Its function is as follows. Part of the twin-arginine translocation (Tat) system that transports large folded proteins containing a characteristic twin-arginine motif in their signal peptide across membranes. Together with TatC, TatB is part of a receptor directly interacting with Tat signal peptides. TatB may form an oligomeric binding site that transiently accommodates folded Tat precursor proteins before their translocation. This chain is Sec-independent protein translocase protein TatB, found in Vibrio parahaemolyticus serotype O3:K6 (strain RIMD 2210633).